Reading from the N-terminus, the 391-residue chain is MEGAFAANWSAEAVNGSAAPPGTEGNRTAGPPQRNEALARVEVAVLCLILFLALSGNACVLLALRTTRHKHSRLFFFMKHLSIADLVVAVFQVLPQLLWDITFRFYGPDLLCRLVKYLQVVGMFASTYLLLLMSLDRCLAICQPLRSLSRRTDRLAVLVTWLGCLVASAPQVHIFSLREVADGVFDCWAVFIQPWGPKAYITWITLAVYIVPVIVLATCYGLISFKIWQNLRLKTAAAAAEAAAGAEGEAADWAGRAILARVSNVKLISKAKIRTVKMTFIVVLAFIVCWTPFFFVQMWSVWDADAPKEASPFIIAMLLASLNSCCNPWIYMLFTGHLFQELVQRFLCCSFRRLKGSRPGETSVSKKSNSSTFVLSQYSSSQRRCSQPSTL.

Topologically, residues 1–38 (MEGAFAANWSAEAVNGSAAPPGTEGNRTAGPPQRNEAL) are extracellular. 3 N-linked (GlcNAc...) asparagine glycosylation sites follow: asparagine 8, asparagine 15, and asparagine 26. The helical transmembrane segment at 39-63 (ARVEVAVLCLILFLALSGNACVLLA) threads the bilayer. Residues 64–74 (LRTTRHKHSRL) are Cytoplasmic-facing. Residues 75 to 97 (FFFMKHLSIADLVVAVFQVLPQL) form a helical membrane-spanning segment. The Extracellular portion of the chain corresponds to 98–113 (LWDITFRFYGPDLLCR). A disulfide bridge connects residues cysteine 112 and cysteine 187. Residues 114–135 (LVKYLQVVGMFASTYLLLLMSL) traverse the membrane as a helical segment. The Cytoplasmic portion of the chain corresponds to 136-154 (DRCLAICQPLRSLSRRTDR). A helical transmembrane segment spans residues 155–175 (LAVLVTWLGCLVASAPQVHIF). The Extracellular segment spans residues 176 to 202 (SLREVADGVFDCWAVFIQPWGPKAYIT). A helical membrane pass occupies residues 203–225 (WITLAVYIVPVIVLATCYGLISF). The Cytoplasmic portion of the chain corresponds to 226–277 (KIWQNLRLKTAAAAAEAAAGAEGEAADWAGRAILARVSNVKLISKAKIRTVK). A helical transmembrane segment spans residues 278 to 296 (MTFIVVLAFIVCWTPFFFV). Residues 297–311 (QMWSVWDADAPKEAS) lie on the Extracellular side of the membrane. A helical transmembrane segment spans residues 312–334 (PFIIAMLLASLNSCCNPWIYMLF). Residues 335–391 (TGHLFQELVQRFLCCSFRRLKGSRPGETSVSKKSNSSTFVLSQYSSSQRRCSQPSTL) are Cytoplasmic-facing. Serine 368 and serine 370 each carry phosphoserine.

Belongs to the G-protein coupled receptor 1 family. Vasopressin/oxytocin receptor subfamily.

The protein localises to the cell membrane. Its function is as follows. Receptor for oxytocin. The activity of this receptor is mediated by G proteins which activate a phosphatidylinositol-calcium second messenger system. The polypeptide is Oxytocin receptor (OXTR) (Bos taurus (Bovine)).